Reading from the N-terminus, the 133-residue chain is Small ribosomal subunit protein uS8 (133 aa).

The protein belongs to the universal ribosomal protein uS8 family. Part of the 30S ribosomal subunit. Contacts proteins S5 and S12.

In terms of biological role, one of the primary rRNA binding proteins, it binds directly to 16S rRNA central domain where it helps coordinate assembly of the platform of the 30S subunit. The polypeptide is Small ribosomal subunit protein uS8 (Endomicrobium trichonymphae).